Reading from the N-terminus, the 1079-residue chain is Electrogenic sodium bicarbonate cotransporter 1 (1079 aa).

The interval 1–62 (MEDEAVLDRG…EKREKERISE (62 aa)) is required for interaction with AHCYL1. Topologically, residues 1–466 (MEDEAVLDRG…FASDFYDALN (466 aa)) are cytoplasmic. Phosphotyrosine is present on Tyr-30. A compositionally biased stretch (basic residues) spans 39 to 52 (YRRRRRHKRKTGHK). The segment at 39–78 (YRRRRRHKRKTGHKEKREKERISENYSDKSDVENADESSS) is disordered. Position 49 is a phosphothreonine; by PKA (Thr-49). Residues 53–70 (EKREKERISENYSDKSDV) are compositionally biased toward basic and acidic residues. 7 positions are modified to phosphoserine: Ser-61, Ser-65, Ser-68, Ser-223, Ser-232, Ser-233, and Ser-245. The disordered stretch occupies residues 237–265 (MFTSPDNGSPAMTHRNLTSSSLNDISDKP). Phosphothreonine occurs at positions 249 and 254. The segment covering 251–260 (RNLTSSSLND) has biased composition (polar residues). Residues Ser-256, Ser-257, and Ser-262 each carry the phosphoserine modification. The helical transmembrane segment at 467 to 491 (IQSLSAILFIYLATVTNAITFGGLL) threads the bilayer. Residues 492 to 501 (GDATDNMQGV) lie on the Extracellular side of the membrane. Residues 502–520 (LESFLGTAVSGAIFCLFAG) traverse the membrane as a helical segment. Residue Gln-521 is a topological domain, cytoplasmic. The chain crosses the membrane as a discontinuously helical span at residues 522–542 (PLTILSSTGPVLVFERLLFNF). Residues 543–550 (SKDHNFDY) are Extracellular-facing. A helical transmembrane segment spans residues 551–571 (LEFRLWIGLWSAFLCLILVAT). Topologically, residues 572–585 (DASFLVQYFTRFTE) are cytoplasmic. A helical membrane pass occupies residues 586–609 (EGFSSLISFIFIYDAFKKMIKLAD). Residues 610–692 (YYPINSDFKV…GNNCNFVPDV (83 aa)) are Extracellular-facing. Residues 693–710 (TLMSFILFLGTYTSSMAL) traverse the membrane as a helical segment. The Cytoplasmic portion of the chain corresponds to 711–725 (KKFKTSRYFPTTARK). A helical membrane pass occupies residues 726 to 745 (LISDFAIILSILIFCVIDAL). Residues 746–779 (VGVDTPKLIVPSEFKPTSPNRGWFVPPFGGNPWW) are Extracellular-facing. An interaction with CA4 region spans residues 748–779 (VDTPKLIVPSEFKPTSPNRGWFVPPFGGNPWW). Residues 780-807 (VYLAAAIPALLVTILIFMDQQITAVIVN) form a helical membrane-spanning segment. The Cytoplasmic segment spans residues 808-819 (RKEHKLKKGAGY). Residues 820–836 (HLDLFWVAILMVVCSFM) traverse the membrane as a helical segment. Position 837 (Ala-837) is a topological domain, extracellular. A discontinuously helical membrane pass occupies residues 838–855 (LPWYVAATVISIAHIDSL). The Cytoplasmic segment spans residues 856-877 (KMETETSAPGEQPKFLGVREQR). Residues 878–894 (VTGTLVFILTGLSVFMA) traverse the membrane as a helical segment. Over 895–901 (PILKFIP) the chain is Extracellular. Residues 902 to 918 (MPVLYGVFLYMGVASLN) traverse the membrane as a helical segment. The Cytoplasmic segment spans residues 919–960 (GVQFMDRLKLLLMPLKHQPDFIYLRHVPLRRVHLFTFLQVLC). An intramembrane region (discontinuously helical) is located at residues 961-986 (LALLWILKSTVAAIIFPVMILALVAV). The Cytoplasmic portion of the chain corresponds to 987–1079 (RKGMDYLFSQ…STFLERHTSC (93 aa)). Residues 1002–1004 (LDD) form a CA2-binding region. Residues 1012-1079 (KKKEDEKKKK…STFLERHTSC (68 aa)) are disordered. Ser-1026 bears the Phosphoserine; by PKA mark. Ser-1029 is modified (phosphoserine). Residues 1030–1033 (DNDD) form a CA2-binding region. Phosphoserine occurs at positions 1034 and 1044. A required for basolateral targeting region spans residues 1057 to 1059 (FLS). A compositionally biased stretch (basic and acidic residues) spans 1062–1079 (KPSDREKSSTFLERHTSC). Ser-1069 carries the post-translational modification Phosphoserine.

This sequence belongs to the anion exchanger (TC 2.A.31) family. In terms of assembly, homodimer. Interacts with CA2/carbonic anhydrase 2 and CA4/carbonic anhydrase 4 which may regulate transporter activity. Isoform 1 but not isoform 2 interacts with AHCYL1 (via PEST domain when phosphorylated); the interaction increases SLC4A4 isoform 1 activity. Interacts with AHCYL2. Post-translationally, phosphorylation of Ser-1026 by PKA increases the binding of CA2 and changes the Na(+):HCO3(-) stoichiometry of the transporter from 3:1 to 2:1. Phosphorylated in presence of STK39 and dephosphorylated in presence of PP1 phosphatase; phosphorylation seems to inhibit SLC4A4 activity. In terms of processing, N-glycosylated. May not be necessary for the transporter basic functions. In terms of tissue distribution, expressed in colonic mucosa, kidney cortex and to gastric mucosa.

Its subcellular location is the basolateral cell membrane. It is found in the cell membrane. It carries out the reaction 2 hydrogencarbonate(out) + Na(+)(out) = 2 hydrogencarbonate(in) + Na(+)(in). It catalyses the reaction 3 hydrogencarbonate(out) + Na(+)(out) = 3 hydrogencarbonate(in) + Na(+)(in). In terms of biological role, electrogenic sodium/bicarbonate cotransporter with a Na(+):HCO3(-) stoichiometry varying from 1:2 to 1:3. May regulate bicarbonate influx/efflux at the basolateral membrane of cells and regulate intracellular pH. The sequence is that of Electrogenic sodium bicarbonate cotransporter 1 (SLC4A4) from Oryctolagus cuniculus (Rabbit).